Reading from the N-terminus, the 114-residue chain is Cytochrome c2 (114 aa).

Pyrrolidone carboxylic acid is present on glutamine 1. Cysteine 13, cysteine 16, histidine 17, and methionine 93 together coordinate heme c.

The protein belongs to the cytochrome c family. In terms of processing, binds 1 heme c group covalently per subunit.

Cytochrome c2 is found mainly in purple, non-sulfur, photosynthetic bacteria where it functions as the electron donor to the oxidized bacteriochlorophyll in the photophosphorylation pathway. However, it may also have a role in the respiratory chain and is found in some non-photosynthetic bacteria. The polypeptide is Cytochrome c2 (cycA) (Rhodopseudomonas palustris).